Reading from the N-terminus, the 443-residue chain is 2-hydroxyethylphosphonate dioxygenase (443 aa).

One can recognise an HTH cro/C1-type 1 domain in the interval 8-63; it reads LAHWMNARKYTAAQTADLAGLPLDDLRRLLGDEANEPDPAAATALAEALSVEPSQL. Lysine 16 contacts substrate. The H-T-H motif DNA-binding region spans 19-38; the sequence is AAQTADLAGLPLDDLRRLLG. Substrate is bound by residues tyrosine 98 and asparagine 126. Histidine 129 provides a ligand contact to Fe cation. Substrate-binding residues include glutamate 176, histidine 182, and serine 196. Position 182 (histidine 182) interacts with Fe cation. In terms of domain architecture, HTH cro/C1-type 2 spans 234-290; the sequence is VLDLFLARRAHTRTSAAEAAGVPPADLEAALRSPASETGLTVLRTLGRALGFDYRVL. A DNA-binding region (H-T-H motif) is located at residues 245-265; that stretch reads TRTSAAEAAGVPPADLEAALR.

This sequence belongs to the non-heme iron-dependent dioxygenase family. As to quaternary structure, homodimer. Fe(2+) serves as cofactor.

It carries out the reaction 2-hydroxyethylphosphonate + O2 = hydroxymethylphosphonate + formate + H(+). It functions in the pathway secondary metabolite biosynthesis; bialaphos biosynthesis. Functionally, non-heme-dependent dioxygenase that catalyzes the conversion of 2-hydroxyethylphosphonate (HEP) to hydroxymethylphosphonate (HMP) in the biosynthesis of phosphinothricin tripeptide (PTT), also known as bialaphos (BA), a natural-product antibiotic and potent herbicide. PTT contains the unusual amino acid phosphinothricin attached to 2 alanine residues. Synthetic phosphinothricin (glufosinate) is a key component of commercial herbicides. The polypeptide is 2-hydroxyethylphosphonate dioxygenase (hepD) (Streptomyces viridochromogenes (strain DSM 40736 / JCM 4977 / BCRC 1201 / Tue 494)).